A 243-amino-acid polypeptide reads, in one-letter code: 4-hydroxy-tetrahydrodipicolinate reductase (243 aa).

Residues 9 to 14 (GANGKM), 78 to 80 (GTS), and 104 to 107 (APNF) contribute to the NAD(+) site. Histidine 134 functions as the Proton donor/acceptor in the catalytic mechanism. Histidine 135 lines the (S)-2,3,4,5-tetrahydrodipicolinate pocket. Lysine 138 functions as the Proton donor in the catalytic mechanism. 144 to 145 (GT) provides a ligand contact to (S)-2,3,4,5-tetrahydrodipicolinate.

Belongs to the DapB family.

The protein resides in the cytoplasm. The catalysed reaction is (S)-2,3,4,5-tetrahydrodipicolinate + NAD(+) + H2O = (2S,4S)-4-hydroxy-2,3,4,5-tetrahydrodipicolinate + NADH + H(+). The enzyme catalyses (S)-2,3,4,5-tetrahydrodipicolinate + NADP(+) + H2O = (2S,4S)-4-hydroxy-2,3,4,5-tetrahydrodipicolinate + NADPH + H(+). It participates in amino-acid biosynthesis; L-lysine biosynthesis via DAP pathway; (S)-tetrahydrodipicolinate from L-aspartate: step 4/4. In terms of biological role, catalyzes the conversion of 4-hydroxy-tetrahydrodipicolinate (HTPA) to tetrahydrodipicolinate. This Legionella pneumophila (strain Corby) protein is 4-hydroxy-tetrahydrodipicolinate reductase.